Reading from the N-terminus, the 633-residue chain is Chaperone protein HtpG (633 aa).

Positions 1 to 344 are a; substrate-binding; the sequence is MSLQPQAETL…SNDLPLNISR (344 aa). The interval 345–560 is b; the sequence is ELLQSNEVIN…ENEMSGHLQR (216 aa). The tract at residues 561 to 633 is c; it reads LLIQTGQDFM…KGLNELLLDS (73 aa).

The protein belongs to the heat shock protein 90 family. In terms of assembly, homodimer.

The protein localises to the cytoplasm. Molecular chaperone. Has ATPase activity. This Coxiella burnetii (strain RSA 493 / Nine Mile phase I) protein is Chaperone protein HtpG.